Here is a 444-residue protein sequence, read N- to C-terminus: DNA primase DnaG (444 aa).

A Toprim domain is found at 173 to 250 (DAILIVEGRS…YVTRAPRGLE (78 aa)). Mg(2+)-binding residues include Glu-179, Asp-221, and Asp-223. Positions 302-354 (VTSSVNKTDKYSQKNESKQFKQQKNENKQVKDNSKEKTQKSTEKHNETEETHL) are disordered. Basic and acidic residues predominate over residues 308-354 (KTDKYSQKNESKQFKQQKNENKQVKDNSKEKTQKSTEKHNETEETHL).

Belongs to the archaeal DnaG primase family. As to quaternary structure, forms a ternary complex with MCM helicase and DNA. Component of the archaeal exosome complex. Mg(2+) serves as cofactor.

The enzyme catalyses ssDNA + n NTP = ssDNA/pppN(pN)n-1 hybrid + (n-1) diphosphate.. In terms of biological role, RNA polymerase that catalyzes the synthesis of short RNA molecules used as primers for DNA polymerase during DNA replication. Also part of the exosome, which is a complex involved in RNA degradation. Acts as a poly(A)-binding protein that enhances the interaction between heteromeric, adenine-rich transcripts and the exosome. This chain is DNA primase DnaG, found in Methanosphaera stadtmanae (strain ATCC 43021 / DSM 3091 / JCM 11832 / MCB-3).